A 225-amino-acid polypeptide reads, in one-letter code: Thymidine kinase (225 aa).

8–15 (GPMFSGKT) provides a ligand contact to ATP. The active-site Proton acceptor is E92. Y122 provides a ligand contact to substrate. The Zn(2+) site is built by C147 and C150. 167 to 171 (KILVG) is a binding site for substrate. Residues C180 and C183 each coordinate Zn(2+). Residues 197 to 207 (SEQINNQTELS) are compositionally biased toward polar residues. Positions 197 to 225 (SEQINNQTELSEPTRQKESLKIKKRRIDS) are disordered. Positions 208–225 (EPTRQKESLKIKKRRIDS) are enriched in basic and acidic residues.

The protein belongs to the thymidine kinase family.

The catalysed reaction is thymidine + ATP = dTMP + ADP + H(+). The sequence is that of Thymidine kinase (TK) from Acanthamoeba polyphaga mimivirus (APMV).